The chain runs to 460 residues: MQLAQLAAFAMTLATSEAAYQGFNYGNKFSDESSKFQADFEAEFKAAKNLVGTSGFTSARLYTMIQAYSTSDVIEAIPAAIAQDTSLLLGLWASGGGMDNEITALKTAISQYGEELGKLVVGISVGSEDLYRNSVEGAEADAGVGVNPDELVEYIKEVRSVIAGTALADVSIGHVDTWDSWTNSSNSAVVEAVDWLGFDGYPFFQSSMANSIDNAKTLFEESVAKTKAVAGDKEVWITETGWPVSGDSQGDAVASIANAKTFWDEVGCPLFGNVNTWWYILQDASPTTPNPSFGIVGSTLSTTPLFDLSCKNSTTSSSSAVVSAAASSAAGSKAVGSSQASSGAAAWATSASGSAKPTFTVGRPGVNGTVFGNGTYPLRPSGSASARPSAGAISSGSGSSSSGSGSSGSTGTSATSGQSSSSGSSAAAGSSSPAAFSGASTLSGSLFGAVVAVFMTLAAL.

The signal sequence occupies residues 1-18 (MQLAQLAAFAMTLATSEA). The active-site Proton donor is the Glu-128. The N-linked (GlcNAc...) asparagine glycan is linked to Asn-183. The active-site Nucleophile is Glu-239. 3 N-linked (GlcNAc...) asparagine glycosylation sites follow: Asn-312, Asn-367, and Asn-373. Positions 379 to 437 (RPSGSASARPSAGAISSGSGSSSSGSGSSGSTGTSATSGQSSSSGSSAAAGSSSPAAFS) are disordered. The segment covering 380–437 (PSGSASARPSAGAISSGSGSSSSGSGSSGSTGTSATSGQSSSSGSSAAAGSSSPAAFS) has biased composition (low complexity). Ser-430 is lipidated: GPI-anchor amidated serine. Positions 431–460 (SSPAAFSGASTLSGSLFGAVVAVFMTLAAL) are cleaved as a propeptide — removed in mature form.

This sequence belongs to the glycosyl hydrolase 17 family. Post-translationally, the GPI-anchor is attached to the protein in the endoplasmic reticulum and serves to target the protein to the cell surface. There, the glucosamine-inositol phospholipid moiety is cleaved off and the GPI-modified mannoprotein is covalently attached via its lipidless GPI glycan remnant to the 1,6-beta-glucan of the outer cell wall layer.

It localises to the cell membrane. The protein localises to the secreted. The protein resides in the cell wall. The catalysed reaction is Hydrolysis of (1-&gt;3)-beta-D-glucosidic linkages in (1-&gt;3)-beta-D-glucans.. Its function is as follows. Glucanases play a role in cell expansion during growth, in cell-cell fusion during mating, and in spore release during sporulation. This enzyme may be involved in beta-glucan degradation and also function biosynthetically as a transglycosylase. This chain is Probable glucan endo-1,3-beta-glucosidase eglC (eglC), found in Aspergillus niger (strain ATCC MYA-4892 / CBS 513.88 / FGSC A1513).